The following is a 357-amino-acid chain: 3-isopropylmalate dehydrogenase (357 aa).

NAD(+) is bound at residue 76 to 89 (GPQWDTIDPSLRPE). 4 residues coordinate substrate: Arg-96, Arg-106, Arg-134, and Asp-224. The Mg(2+) site is built by Asp-224, Asp-248, and Asp-252. 282 to 294 (GSAPDIAGKGIAN) is an NAD(+) binding site.

This sequence belongs to the isocitrate and isopropylmalate dehydrogenases family. LeuB type 1 subfamily. As to quaternary structure, homodimer. Requires Mg(2+) as cofactor. Mn(2+) serves as cofactor.

It is found in the cytoplasm. It catalyses the reaction (2R,3S)-3-isopropylmalate + NAD(+) = 4-methyl-2-oxopentanoate + CO2 + NADH. Its pathway is amino-acid biosynthesis; L-leucine biosynthesis; L-leucine from 3-methyl-2-oxobutanoate: step 3/4. Catalyzes the oxidation of 3-carboxy-2-hydroxy-4-methylpentanoate (3-isopropylmalate) to 3-carboxy-4-methyl-2-oxopentanoate. The product decarboxylates to 4-methyl-2 oxopentanoate. This is 3-isopropylmalate dehydrogenase from Xanthomonas euvesicatoria pv. vesicatoria (strain 85-10) (Xanthomonas campestris pv. vesicatoria).